The sequence spans 1216 residues: ATP-dependent helicase/nuclease subunit A (1216 aa).

Residues 26–488 (QKKTAEQIEA…IILKENFRSS (463 aa)) enclose the UvrD-like helicase ATP-binding domain. 47–54 (ASAGSGKT) contributes to the ATP binding site. The UvrD-like helicase C-terminal domain occupies 515-802 (KHQLVFANTK…ELMTIHKSKG (288 aa)).

Belongs to the helicase family. AddA subfamily. In terms of assembly, heterodimer of AddA and AddB/RexB. The cofactor is Mg(2+).

It catalyses the reaction Couples ATP hydrolysis with the unwinding of duplex DNA by translocating in the 3'-5' direction.. The enzyme catalyses ATP + H2O = ADP + phosphate + H(+). Functionally, the heterodimer acts as both an ATP-dependent DNA helicase and an ATP-dependent, dual-direction single-stranded exonuclease. Recognizes the chi site generating a DNA molecule suitable for the initiation of homologous recombination. The AddA nuclease domain is required for chi fragment generation; this subunit has the helicase and 3' -&gt; 5' nuclease activities. This is ATP-dependent helicase/nuclease subunit A from Streptococcus pneumoniae serotype 2 (strain D39 / NCTC 7466).